The following is a 215-amino-acid chain: Cytochrome b6 (215 aa).

The chain crosses the membrane as a helical span at residues Ile-32–Phe-52. Residue Cys-35 coordinates heme c. Residues His-86 and His-100 each contribute to the heme b site. Transmembrane regions (helical) follow at residues Ala-90–Phe-110, Leu-116–Tyr-136, and Leu-186–Ile-206. Heme b is bound by residues His-187 and His-202.

It belongs to the cytochrome b family. PetB subfamily. In terms of assembly, the 4 large subunits of the cytochrome b6-f complex are cytochrome b6, subunit IV (17 kDa polypeptide, PetD), cytochrome f and the Rieske protein, while the 4 small subunits are PetG, PetL, PetM and PetN. The complex functions as a dimer. Requires heme b as cofactor. Heme c is required as a cofactor.

The protein localises to the plastid. It is found in the chloroplast thylakoid membrane. Its function is as follows. Component of the cytochrome b6-f complex, which mediates electron transfer between photosystem II (PSII) and photosystem I (PSI), cyclic electron flow around PSI, and state transitions. This is Cytochrome b6 from Klebsormidium bilatum (Filamentous green alga).